Consider the following 1040-residue polypeptide: Multidrug resistance protein MdtB (1040 aa).

A run of 12 helical transmembrane segments spans residues 16–36, 347–367, 369–389, 396–416, 440–460, 472–492, 537–557, 863–883, 888–908, 911–931, 968–988, and 998–1018; these read FIMRPVATTLLMVAILLAGII, LMMAIALVVMIIYLFLRNIPA, IIPGVAVPLSLIGTFAVMVFL, LTLMALTIATGFVVDDAIVVI, IGFTIISLTFSLIAVLIPLLF, FAITLAVAILISAVVSLTLTP, WLTLSVALSTLLLSVLLWVFI, LGSTVWLIVAAVVAMYIVLGI, FIHPITILSTLPTAGVGALLA, IAGSELDVIAIIGIILLIGIV, ILMTTLAALLGALPLMLSTGV, and IGMVGGLVVSQVLTLFTTPVI.

The protein belongs to the resistance-nodulation-cell division (RND) (TC 2.A.6) family. MdtB subfamily. Part of a tripartite efflux system composed of MdtA, MdtB and MdtC. MdtB forms a heteromultimer with MdtC.

It localises to the cell inner membrane. This Shigella boydii serotype 18 (strain CDC 3083-94 / BS512) protein is Multidrug resistance protein MdtB.